Consider the following 133-residue polypeptide: Fatty acid-binding protein homolog 1 (133 aa).

Methionine 1 is modified (N-acetylmethionine). Hexadecanoate is bound by residues arginine 107 and 127–129 (RTY).

This sequence belongs to the calycin superfamily. Fatty-acid binding protein (FABP) family.

Functionally, has been implicated in the acquisition, storage, and transport of lipids, and may be important to the organism since it is incapable of synthesizing most of its lipids de novo. The polypeptide is Fatty acid-binding protein homolog 1 (FABP1) (Echinococcus granulosus (Hydatid tapeworm)).